A 190-amino-acid chain; its full sequence is MPRANEIKKGMVLNYNGKLLIVKNIDIQSPSARGAATLYKMRFSDVRTGLKVEERFKGDDIVDTVTLTRRFVDFSYVDGNEYVFMDKEDYTPYTFTKEQIEEELQFIPEGGMPDMQVLTWDGQLLALELPQTVDLEIIETAPGIKGASASSRTKPATMSTGLVIQVPEYLTTGEKIRIHIEECRYMGRAD.

The protein belongs to the elongation factor P family.

This Klebsiella pneumoniae (strain 342) protein is Elongation factor P-like protein.